Consider the following 450-residue polypeptide: MGKYFGTDGFRGEANVTLTVDHAFKVGRFLGWYYGKNHEDGKAKIVIGKDTRRSSYMFEYSLVAGLTASGANAYLLHVTTTPSVSYVARTEDFDCGIMISASHNPFYDNGIKLINAAGEKMKEDVIAEIEKYLDGELGEIPYATRENIGCTVDYTAGRNRYMGYLMSLAIYSFKGIRVGLDASNGSAWTLAKAVFDALGAKTYVINAAPDGTNINANCGSTHIEGLQDLVRREHLDVGFAFDGDADRCLCVDEKGEVITGDHILYIYGCYMKDRDKLVGNKVVTTVMSNFGLYKAFDAVGIEYEKTKVGDKYVYECMSENGYRIGGEQSGHIIFSKYATTGDGIITALKMMEVMLAKKKTLSELAAPLVIYPQVLKNIRVTDKTQAQDDADVKAAVEAVANALGTDGRILVRESGTEPVVRVMVEAGSTEECEKYVDQVIDVIKSKGYAV.

The active-site Phosphoserine intermediate is the serine 102. 4 residues coordinate Mg(2+): serine 102, aspartate 242, aspartate 244, and aspartate 246. Serine 102 is subject to Phosphoserine.

Belongs to the phosphohexose mutase family. Requires Mg(2+) as cofactor. In terms of processing, activated by phosphorylation.

The catalysed reaction is alpha-D-glucosamine 1-phosphate = D-glucosamine 6-phosphate. Its function is as follows. Catalyzes the conversion of glucosamine-6-phosphate to glucosamine-1-phosphate. This is Phosphoglucosamine mutase from Lachnospira eligens (strain ATCC 27750 / DSM 3376 / VPI C15-48 / C15-B4) (Eubacterium eligens).